A 317-amino-acid polypeptide reads, in one-letter code: Enoyl-CoA delta isomerase 3, peroxisomal (317 aa).

The region spanning 1-46 (MPKPGVFNFVNKATWDARNALGSLPKETARKNYVDLVSSLSSSSEA) is the ACB domain. Residues 40–60 (LSSSSEAPSQGKRGADEKARE) form a disordered region. 120–124 (SGNDL) provides a ligand contact to substrate. The Microbody targeting signal motif lies at 315–317 (AKL).

It belongs to the enoyl-CoA hydratase/isomerase family. In terms of tissue distribution, expressed at high levels in the kidney. Also detected at very low levels in the duodenum, jejunum, ileum, heart, liver, lung, and brown adipose tissue (at protein level). In the kidney, expression seems to be localized mainly to the proximal tubule.

The protein localises to the peroxisome. It catalyses the reaction a (3Z)-enoyl-CoA = a 4-saturated (2E)-enoyl-CoA. The catalysed reaction is a (3E)-enoyl-CoA = a 4-saturated (2E)-enoyl-CoA. It carries out the reaction (3E)-nonenoyl-CoA = (2E)-nonenoyl-CoA. Catalyzes the isomerization of trans-3-nonenoyl-CoA into trans-2-nonenoyl-CoA. May also have activity towards other enoyl-CoA species. The polypeptide is Enoyl-CoA delta isomerase 3, peroxisomal (Mus musculus (Mouse)).